A 261-amino-acid polypeptide reads, in one-letter code: Imidazole glycerol phosphate synthase subunit HisF (261 aa).

Catalysis depends on residues Asp-16 and Asp-135.

Belongs to the HisA/HisF family. Heterodimer of HisH and HisF.

It is found in the cytoplasm. It carries out the reaction 5-[(5-phospho-1-deoxy-D-ribulos-1-ylimino)methylamino]-1-(5-phospho-beta-D-ribosyl)imidazole-4-carboxamide + L-glutamine = D-erythro-1-(imidazol-4-yl)glycerol 3-phosphate + 5-amino-1-(5-phospho-beta-D-ribosyl)imidazole-4-carboxamide + L-glutamate + H(+). The protein operates within amino-acid biosynthesis; L-histidine biosynthesis; L-histidine from 5-phospho-alpha-D-ribose 1-diphosphate: step 5/9. Functionally, IGPS catalyzes the conversion of PRFAR and glutamine to IGP, AICAR and glutamate. The HisF subunit catalyzes the cyclization activity that produces IGP and AICAR from PRFAR using the ammonia provided by the HisH subunit. The sequence is that of Imidazole glycerol phosphate synthase subunit HisF from Mycobacterium ulcerans (strain Agy99).